The sequence spans 134 residues: Interleukin-5 (134 aa).

Residues 1–19 (MRMLLHLSLLALGAAYVYA) form the signal peptide. O-linked (GalNAc...) threonine glycosylation occurs at T22. 2 N-linked (GlcNAc...) asparagine glycosylation sites follow: N47 and N90.

The protein belongs to the IL-5 family. Homodimer; disulfide-linked. Interacts with IL5RA. Interacts with CSF2RB.

Its subcellular location is the secreted. In terms of biological role, homodimeric cytokine expressed predominantly by T-lymphocytes and NK cells that plays an important role in the survival, differentiation, and chemotaxis of eosinophils. Also acts on activated and resting B-cells to induce immunoglobulin production, growth, and differentiation. Mechanistically, exerts its biological effects through a receptor composed of IL5RA subunit and the cytokine receptor common subunit beta/CSF2RB. Binding to the receptor leads to activation of various kinases including LYN, SYK and JAK2 and thereby propagates signals through the RAS-MAPK and JAK-STAT5 pathways respectively. The polypeptide is Interleukin-5 (IL5) (Macaca mulatta (Rhesus macaque)).